We begin with the raw amino-acid sequence, 91 residues long: Cell division topological specificity factor (91 aa).

The protein belongs to the MinE family.

Functionally, prevents the cell division inhibition by proteins MinC and MinD at internal division sites while permitting inhibition at polar sites. This ensures cell division at the proper site by restricting the formation of a division septum at the midpoint of the long axis of the cell. This chain is Cell division topological specificity factor, found in Erwinia tasmaniensis (strain DSM 17950 / CFBP 7177 / CIP 109463 / NCPPB 4357 / Et1/99).